A 269-amino-acid chain; its full sequence is Magnetosome protein MamX (269 aa).

The Cytoplasmic portion of the chain corresponds to 1 to 10 (MNTKAVAHPD). A helical membrane pass occupies residues 11 to 31 (IAVWIMALGIAFSMALVLTAL). The Lumenal portion of the chain corresponds to 32 to 269 (FNANPWEDHT…NVGGVDAEER (238 aa)). The short motif at 48 to 71 (IVAGMAAPHRDGREKMVCSSCHIV) is the MCR (magnetochrome) 1 element. Residues Cys-65, Cys-68, His-69, Cys-104, Cys-107, and His-108 each contribute to the heme site. Residues 87–110 (IVEGTPAPHVDGREKMACASCHTI) carry the MCR 2 motif.

It belongs to the magnetosome MamX family. Probably interacts with FtsZ-like and MamY proteins. The cofactor is heme.

The protein localises to the magnetosome membrane. Required for correct biomineralization of the magnetosome, maybe via redox control. May function with MamY, MamZ amd Mms6 in biomineralization. This chain is Magnetosome protein MamX, found in Magnetospirillum gryphiswaldense (strain DSM 6361 / JCM 21280 / NBRC 15271 / MSR-1).